The chain runs to 161 residues: Transcriptional repressor NrdR (161 aa).

The segment covering 1-11 (MRCPSCNSLDT) has biased composition (polar residues). Positions 1–20 (MRCPSCNSLDTQVKDSRPTE) are disordered. A zinc finger spans residues 3-34 (CPSCNSLDTQVKDSRPTEDSSVIRRRRVCVTC). In terms of domain architecture, ATP-cone spans 49–139 (LTVIKRNGRR…VYRNFREAKD (91 aa)).

Belongs to the NrdR family. Zn(2+) serves as cofactor.

Functionally, negatively regulates transcription of bacterial ribonucleotide reductase nrd genes and operons by binding to NrdR-boxes. This is Transcriptional repressor NrdR from Bradyrhizobium sp. (strain ORS 278).